Reading from the N-terminus, the 433-residue chain is MVWKVAVFLSVALGIGAVPIDDPEDGGKHWVVIVAGSNGWYNYRHQADACHAYQIIHRNGIPDEQIVVMMYDDIAYSEDNPTPGIVINRPNGTDVYQGVPKDYTGEDVTPQNFLAVLRGDAEAVKGIGSGKVLKSGPQDHVFIYFTDHGSTGILVFPNEDLHVKDLNETIHYMYKHKMYRKMVFYIEACESGSMMNHLPDNINVYATTAANPRESSYACYYDEKRSTYLGDWYSVNWMEDSDVEDLTKETLHKQYHLVKSHTNTSHVMQYGNKTISTMKVMQFQGMKRKASSPVPLPPVTHLDLTPSPDVPLTIMKRKLMNTNDLEESRQLTEEIQRHLDARHLIEKSVRKIVSLLAASEAEVEQLLSERAPLTGHSCYPEALLHFRTHCFNWHSPTYEYALRHLYVLVNLCEKPYPLHRIKLSMDHVCLGHY.

A signal peptide spans methionine 1–alanine 17. N-linked (GlcNAc...) asparagine glycosylation is present at asparagine 91. Residue histidine 148 is part of the active site. Asparagine 167 is a glycosylation site (N-linked (GlcNAc...) asparagine). The active-site Nucleophile is the cysteine 189. N-linked (GlcNAc...) asparagine glycosylation is found at asparagine 263 and asparagine 272. A propeptide spanning residues aspartate 324 to tyrosine 433 is cleaved from the precursor. 2 cysteine pairs are disulfide-bonded: cysteine 378/cysteine 412 and cysteine 390/cysteine 429.

This sequence belongs to the peptidase C13 family. In terms of assembly, homodimer before autocatalytic removal of the propeptide. Monomer after autocatalytic processing. May interact with integrins. In terms of processing, activated by autocatalytic processing at pH 4. As to expression, ubiquitous. Particularly abundant in kidney, heart and placenta.

The protein localises to the lysosome. The catalysed reaction is Hydrolysis of proteins and small molecule substrates at -Asn-|-Xaa- bonds.. With respect to regulation, inhibited by CST6. Its function is as follows. Has a strict specificity for hydrolysis of asparaginyl bonds. Can also cleave aspartyl bonds slowly, especially under acidic conditions. Involved in the processing of proteins for MHC class II antigen presentation in the lysosomal/endosomal system. Also involved in MHC class I antigen presentation in cross-presenting dendritic cells by mediating cleavage and maturation of Perforin-2 (MPEG1), thereby promoting antigen translocation in the cytosol. Required for normal lysosomal protein degradation in renal proximal tubules. Required for normal degradation of internalized EGFR. Plays a role in the regulation of cell proliferation via its role in EGFR degradation. This is Legumain from Homo sapiens (Human).